An 843-amino-acid polypeptide reads, in one-letter code: DNA-directed RNA polymerase subunit beta' (843 aa).

Zn(2+) is bound by residues C70, C72, C85, and C88. Positions 686, 688, and 690 each coordinate Mg(2+).

The protein belongs to the RNA polymerase beta' chain family. RpoC1 subfamily. As to quaternary structure, in plastids the minimal PEP RNA polymerase catalytic core is composed of four subunits: alpha, beta, beta', and beta''. When a (nuclear-encoded) sigma factor is associated with the core the holoenzyme is formed, which can initiate transcription. Mg(2+) serves as cofactor. Zn(2+) is required as a cofactor.

It is found in the plastid. The protein localises to the chloroplast. It carries out the reaction RNA(n) + a ribonucleoside 5'-triphosphate = RNA(n+1) + diphosphate. In terms of biological role, DNA-dependent RNA polymerase catalyzes the transcription of DNA into RNA using the four ribonucleoside triphosphates as substrates. The polypeptide is DNA-directed RNA polymerase subunit beta' (Trieres chinensis (Marine centric diatom)).